The chain runs to 632 residues: U-box domain-containing protein 14 (632 aa).

Residues 247-321 (VIPEYFRCPI…ALWCESNGIE (75 aa)) form the U-box domain. ARM repeat units follow at residues 377–416 (VDNR…NLSI), 418–457 (EGNK…SLSV), 459–498 (DENK…NLCI), 500–539 (QGNK…ILST), and 541–580 (QEGK…YLCI).

Homodimer. Interacts with SNL1. Binds to SD11, SD16, SD17, SD18, SD113, SD129 and SD25. As to expression, expressed in flowers, green siliques, seeds and rosette leaves.

It catalyses the reaction S-ubiquitinyl-[E2 ubiquitin-conjugating enzyme]-L-cysteine + [acceptor protein]-L-lysine = [E2 ubiquitin-conjugating enzyme]-L-cysteine + N(6)-ubiquitinyl-[acceptor protein]-L-lysine.. Its pathway is protein modification; protein ubiquitination. Functionally, functions as an E3 ubiquitin ligase with specific E2 ubiquitin-conjugating enzymes. Undergoes auto-ubiquitination. The sequence is that of U-box domain-containing protein 14 (PUB14) from Arabidopsis thaliana (Mouse-ear cress).